Reading from the N-terminus, the 246-residue chain is Mediator of RNA polymerase II transcription subunit 6 (246 aa).

Disordered stretches follow at residues 165–186 and 207–246; these read MKKKEEEKKEEDERKLEERSTN and EALEKLDVKEEENPKPEEAPSASAVGEPKFAEPAARATTK. Basic and acidic residues-rich tracts occupy residues 166–184 and 208–224; these read KKKEEEKKEEDERKLEERS and ALEKLDVKEEENPKPEE.

The protein belongs to the Mediator complex subunit 6 family. As to quaternary structure, component of the Mediator complex. Interacts with let-19/mdt-13. Interacts with RNA polymerase II. Interacts with mdt-28.

It localises to the nucleus. Its function is as follows. Component of the Mediator complex, a coactivator involved in the regulated transcription of nearly all RNA polymerase II-dependent genes. Mediator functions as a bridge to convey information from gene-specific regulatory proteins to the basal RNA polymerase II transcription machinery. Mediator is recruited to promoters by direct interactions with regulatory proteins and serves as a scaffold for the assembly of a functional preinitiation complex with RNA polymerase II and the general transcription factors. The polypeptide is Mediator of RNA polymerase II transcription subunit 6 (mdt-6) (Caenorhabditis briggsae).